We begin with the raw amino-acid sequence, 423 residues long: Mannose-6-phosphate isomerase (423 aa).

A2 is subject to N-acetylalanine. Phosphoserine is present on residues S102 and S108. Positions 110, 112, 137, and 276 each coordinate Zn(2+). R295 is an active-site residue.

This sequence belongs to the mannose-6-phosphate isomerase type 1 family. Requires Zn(2+) as cofactor.

The protein resides in the cytoplasm. The catalysed reaction is D-mannose 6-phosphate = D-fructose 6-phosphate. It functions in the pathway nucleotide-sugar biosynthesis; GDP-alpha-D-mannose biosynthesis; alpha-D-mannose 1-phosphate from D-fructose 6-phosphate: step 1/2. Isomerase that catalyzes the interconversion of fructose-6-P and mannose-6-P and has a critical role in the supply of D-mannose derivatives required for many eukaryotic glycosylation reactions. In Rattus norvegicus (Rat), this protein is Mannose-6-phosphate isomerase.